A 275-amino-acid chain; its full sequence is 2,3,4,5-tetrahydropyridine-2,6-dicarboxylate N-succinyltransferase (275 aa).

2 residues coordinate substrate: arginine 108 and aspartate 145.

It belongs to the transferase hexapeptide repeat family. As to quaternary structure, homotrimer.

Its subcellular location is the cytoplasm. It catalyses the reaction (S)-2,3,4,5-tetrahydrodipicolinate + succinyl-CoA + H2O = (S)-2-succinylamino-6-oxoheptanedioate + CoA. The protein operates within amino-acid biosynthesis; L-lysine biosynthesis via DAP pathway; LL-2,6-diaminopimelate from (S)-tetrahydrodipicolinate (succinylase route): step 1/3. This is 2,3,4,5-tetrahydropyridine-2,6-dicarboxylate N-succinyltransferase from Roseobacter denitrificans (strain ATCC 33942 / OCh 114) (Erythrobacter sp. (strain OCh 114)).